A 67-amino-acid chain; its full sequence is Cysteine-rich venom protein bucarin (67 aa).

Positions 13 to 58 constitute an SCP domain; that stretch reads VDKHNALRRSVRPTARNMLQMEWNSNAAQNAKRFADRCTFAHSPPH.

Belongs to the CRISP family. In terms of processing, contains 8 disulfide bonds. As to expression, expressed by the venom gland.

The protein resides in the secreted. In terms of biological role, blocks contraction of smooth muscle elicited by high potassium-induced depolarization, but does not block caffeine-stimulated contraction. May target voltage-gated calcium channels on smooth muscle. In Bungarus candidus (Malayan krait), this protein is Cysteine-rich venom protein bucarin.